Consider the following 125-residue polypeptide: Small ribosomal subunit protein uS12 (125 aa).

A disordered region spans residues 9–31 (RQGREVEKIKSKSPAMENSPQRR). Aspartate 89 is modified (3-methylthioaspartic acid). Residues 105-125 (QGVKDRKQSRSKYGAKRPKAK) are disordered. Residues 113–125 (SRSKYGAKRPKAK) show a composition bias toward basic residues.

Belongs to the universal ribosomal protein uS12 family. In terms of assembly, part of the 30S ribosomal subunit. Contacts proteins S8 and S17. May interact with IF1 in the 30S initiation complex.

Its function is as follows. With S4 and S5 plays an important role in translational accuracy. Interacts with and stabilizes bases of the 16S rRNA that are involved in tRNA selection in the A site and with the mRNA backbone. Located at the interface of the 30S and 50S subunits, it traverses the body of the 30S subunit contacting proteins on the other side and probably holding the rRNA structure together. The combined cluster of proteins S8, S12 and S17 appears to hold together the shoulder and platform of the 30S subunit. The polypeptide is Small ribosomal subunit protein uS12 (Polaromonas naphthalenivorans (strain CJ2)).